Reading from the N-terminus, the 664-residue chain is Translation factor guf1, mitochondrial (664 aa).

Residues 1–43 constitute a mitochondrion transit peptide; it reads MRGCLQLARWLSAGPKCPAASLPKAPSGLYNTIRSFTSSAQLA. The tr-type G domain occupies 66-246; it reads DRYRNFCIVA…TVVEKIPAPV (181 aa). GTP is bound by residues 75–82, 139–143, and 193–196; these read AHVDHGKS, DTPGH, and NKVD.

The protein belongs to the TRAFAC class translation factor GTPase superfamily. Classic translation factor GTPase family. LepA subfamily.

It localises to the mitochondrion inner membrane. The catalysed reaction is GTP + H2O = GDP + phosphate + H(+). Functionally, promotes mitochondrial protein synthesis. May act as a fidelity factor of the translation reaction, by catalyzing a one-codon backward translocation of tRNAs on improperly translocated ribosomes. Binds to mitochondrial ribosomes in a GTP-dependent manner. This is Translation factor guf1, mitochondrial (guf1) from Aspergillus oryzae (strain ATCC 42149 / RIB 40) (Yellow koji mold).